The following is a 382-amino-acid chain: Queuine tRNA-ribosyltransferase (382 aa).

Asp93 acts as the Proton acceptor in catalysis. Substrate contacts are provided by residues 93–97 (DSGGF), Asp147, Gln191, and Gly218. Residues 249 to 255 (GVGKPED) are RNA binding. Residue Asp268 is the Nucleophile of the active site. An RNA binding; important for wobble base 34 recognition region spans residues 273 to 277 (TRNAR). Cys306, Cys308, Cys311, and His337 together coordinate Zn(2+).

It belongs to the queuine tRNA-ribosyltransferase family. In terms of assembly, homodimer. Within each dimer, one monomer is responsible for RNA recognition and catalysis, while the other monomer binds to the replacement base PreQ1. Zn(2+) is required as a cofactor.

The enzyme catalyses 7-aminomethyl-7-carbaguanine + guanosine(34) in tRNA = 7-aminomethyl-7-carbaguanosine(34) in tRNA + guanine. It participates in tRNA modification; tRNA-queuosine biosynthesis. Functionally, catalyzes the base-exchange of a guanine (G) residue with the queuine precursor 7-aminomethyl-7-deazaguanine (PreQ1) at position 34 (anticodon wobble position) in tRNAs with GU(N) anticodons (tRNA-Asp, -Asn, -His and -Tyr). Catalysis occurs through a double-displacement mechanism. The nucleophile active site attacks the C1' of nucleotide 34 to detach the guanine base from the RNA, forming a covalent enzyme-RNA intermediate. The proton acceptor active site deprotonates the incoming PreQ1, allowing a nucleophilic attack on the C1' of the ribose to form the product. After dissociation, two additional enzymatic reactions on the tRNA convert PreQ1 to queuine (Q), resulting in the hypermodified nucleoside queuosine (7-(((4,5-cis-dihydroxy-2-cyclopenten-1-yl)amino)methyl)-7-deazaguanosine). This is Queuine tRNA-ribosyltransferase from Haemophilus influenzae (strain ATCC 51907 / DSM 11121 / KW20 / Rd).